The primary structure comprises 665 residues: MKKPFYITTPIYYPSGKLHIGSAYTTIACDVLARYKRLMGHEVFYLTGLDEHGQKIQTKAKEAGITPQTYVDNMAKDVKALWQLLDISYDTFIRTTDDYHEEVVAAVFEKLLAQDDIYLGEYSGWYSVSDEEFFTESQLKEVFRDEDGQVIGGIAPSGHEVEWVSEESYFLRLSKYADRLVAFFKERPDFIQPDGRMNEMVKNFIEPGLEDLAVSRTTFTWGVPVPSDPKHVVYVWIDALLNYATALGYGQANHANFDKFWNGTVFHMVGKDILRFHSIYWPILLMMLDLPMPDRLIAHGWFVMKDGKMSKSKGNVVYPEMLVERFGLDPLRYYLMRSLPVGSDGTFTPEDYVGRINYELANDLGNLLNRTVAMINKYFDGTVPAYVDNGTAFDADLSQLIDAQLADYHKHMEAVDYPRALEAVWTIIARTNKYIDETAPWVLAKEDGDKAQLASVMAHLAASLRVVAHVIQPFMMETSAAIMAQLGLAPVSDLSTLALADFPANTKVVAKGTPIFPRLDMEAEIDYIKAQMGDSSAISQEKEWVPEEVALKSEKDVITFETFDAVEIRVAEVKEVSKVEGSEKLLRFRVDAGDGQDRQILSGIAKCYPNEQELVGKKLQIVANLKPRKMMKQYISQGMILSAEHGDQLTVLTVDPSVPNGSIIG.

Positions 12-22 match the 'HIGH' region motif; the sequence is YYPSGKLHIGS. The 'KMSKS' region motif lies at 308-312; sequence KMSKS. K311 provides a ligand contact to ATP. A tRNA-binding domain is found at 562–665; that stretch reads TFDAVEIRVA…PSVPNGSIIG (104 aa).

The protein belongs to the class-I aminoacyl-tRNA synthetase family. MetG type 2B subfamily. In terms of assembly, homodimer.

It localises to the cytoplasm. The enzyme catalyses tRNA(Met) + L-methionine + ATP = L-methionyl-tRNA(Met) + AMP + diphosphate. Its function is as follows. Is required not only for elongation of protein synthesis but also for the initiation of all mRNA translation through initiator tRNA(fMet) aminoacylation. The protein is Methionine--tRNA ligase (metG) of Streptococcus pyogenes serotype M6 (strain ATCC BAA-946 / MGAS10394).